The sequence spans 811 residues: TLR4 interactor with leucine rich repeats (811 aa).

An N-terminal signal peptide occupies residues 1–25; it reads MEAARALRLLLVVCGCLALPPLAEP. Residues 26-57 form the LRRNT domain; it reads VCPERCDCQHPQHLLCTNRGLRVVPKTSSLPS. At 26-696 the chain is on the extracellular side; that stretch reads VCPERCDCQH…AGSRGGVDYQ (671 aa). 12 LRR repeats span residues 61 to 81, 84 to 105, 108 to 129, 132 to 153, 156 to 177, 180 to 201, 204 to 223, 230 to 251, 254 to 275, 278 to 299, 302 to 323, and 326 to 347; these read VLTY…DFHR, QLRR…TFEK, RLEE…TLAP, KLRI…SFEG, SLVK…VFAP, NLLY…AFAQ, KLRF…RHAA, SLSS…IFQH, RLGL…AFWG, ALRE…LLEP, SLEA…TFGH, and RLRE…IFAA. An N-linked (GlcNAc...) asparagine glycan is attached at N73. N-linked (GlcNAc...) asparagine glycosylation occurs at N209. Residues 359–416 enclose the LRRCT domain; sequence NGWTCDCRLRGLKRWMGDWHSQGRLLTVFVQCRHPPALRGKYLDYLDDQQLQNGSCAD. The interval 484–549 is disordered; sequence LSRRGPGLQQ…PSPAGDPWQR (66 aa). 2 stretches are compositionally biased toward low complexity: residues 492-508 and 530-544; these read QQPS…APQS and PTPT…SPAG. The N-linked (GlcNAc...) asparagine glycan is linked to N589. Residues 697–717 traverse the membrane as a helical segment; that stretch reads LLTLALLTVNALLVLLALAAW. Topologically, residues 718-811 are cytoplasmic; that stretch reads ASRWLRRKLR…EDRLLQRFAD (94 aa). S798 is subject to Phosphoserine.

In terms of assembly, belongs to the lipopolysaccharide (LPS) receptor, a multi-protein complex containing at least CD14, MD-2 and TLR4. Interacts with TLR4; this interaction is greatly enhanced by LPS stimulation. Interacts with LPS. Post-translationally, N-glycolysaled. As to expression, highly expressed in the brain, ovary, small intestine and spleen.

The protein localises to the membrane. In terms of biological role, component of the TLR4 signaling complex. Mediates the innate immune response to bacterial lipopolysaccharide (LPS) leading to cytokine secretion. This Homo sapiens (Human) protein is TLR4 interactor with leucine rich repeats (TRIL).